The primary structure comprises 127 residues: Thioredoxin domain-containing protein 8 (127 aa).

The Thioredoxin domain maps to 2 to 127 (VQKIKSMREF…KLEEKIQELM (126 aa)). A disulfide bond links Cys-32 and Cys-35.

Belongs to the thioredoxin family. In terms of tissue distribution, testis-specific. Expressed in spermatozoa, sperm tail, elongated and round spermatids.

The protein localises to the cytoplasm. It localises to the golgi apparatus. In terms of biological role, may be required for post-translational modifications of proteins required for acrosomal biogenesis. May act by reducing disulfide bonds within the sperm. This Rattus norvegicus (Rat) protein is Thioredoxin domain-containing protein 8 (Txndc8).